The following is a 589-amino-acid chain: Leucine-rich repeat and immunoglobulin-like domain-containing nogo receptor-interacting protein 3 (589 aa).

The first 23 residues, 1–23, serve as a signal peptide directing secretion; the sequence is MTCWLHMLGLHLLLLPTAPLAAG. The LRRNT domain maps to 24 to 53; the sequence is CPARCECSASTRTVACGRRRLTAIPEGIPA. At 24 to 528 the chain is on the extracellular side; the sequence is CPARCECSAS…LDLTTILVST (505 aa). 11 LRR repeats span residues 54–75, 78–99, 102–123, 126–147, 150–171, 174–195, 206–227, 246–267, 270–291, 294–315, and 318–339; these read ETRM…DLAS, TLEE…AFAN, RLRV…VFTH, SLTL…SFQD, SLQR…AFAG, GLAE…SLGH, HLAI…SHLE, NLTS…ALRQ, HLTC…SFRD, RLRE…AFVG, and QIRL…TFHS. A glycan (N-linked (GlcNAc...) asparagine) is linked at asparagine 184. Asparagine 246, asparagine 256, and asparagine 275 each carry an N-linked (GlcNAc...) asparagine glycan. An N-linked (GlcNAc...) asparagine glycan is attached at asparagine 323. Residues 351–405 enclose the LRRCT domain; it reads NPLACDCRLLWIVQRRKTLNFDGRLPACATPAEVRGDALHNLPDSVLFEYFVCRK. In terms of domain architecture, Ig-like C2-type spans 406–495; that stretch reads PKIRERRLQH…GNDTYFATLT (90 aa). The cysteines at positions 428 and 479 are disulfide-linked. N-linked (GlcNAc...) asparagine glycosylation is found at asparagine 487, asparagine 501, and asparagine 509. Residues 529-549 traverse the membrane as a helical segment; sequence AMGCITFLGVVLFCFLLLFVW. Topologically, residues 550–589 are cytoplasmic; sequence SRGRGQHKNNFSVEYSFRKVDGPAAAAGQGGARKFNMKMI.

It localises to the membrane. The chain is Leucine-rich repeat and immunoglobulin-like domain-containing nogo receptor-interacting protein 3 (Lingo3) from Mus musculus (Mouse).